The sequence spans 448 residues: MDVRRPIREAVNNRRKPKFLSVSFNQDDSCFSVALENGFRIFNTDPLTSKLSKTFKESATNQSRGTGIGYTRMLYRTNYIALVGGGKRPRHALNKLIIWDDLLQKETITLKFMSSIKDVFLSRIHIVVVLENTIEIFQFQTNPQRICPILDIPPNGSVDYVVCSSKHLQSQASQSQSKILEIIAFPSNKCVGQIQVADLSQIKYNSQNPKESALLPTSIIKAHKNPIKLVRLNRQGTMVATCSVQGTLIRIFSTHNGTLIKEFRRGVDKADIYEMSFSPNGSKLAVLSNKQTLHIFQIFETTNTETNTPDHSRANGSSHPLKNYIPKGLWRPKYLDSVWSICNAHLKNPIFDAHRNDNSGDVTHDNEFYKDRCRIGWCQDSNNREQDDSLVLVWQNSGIWEKFVILEKEQQDSSKTHYSLNESLRNEDTKSAGEPTRWELVRESWREL.

Residues Asn61, Asn155, Asn256, Asn280, Asn315, and Asn421 are each glycosylated (N-linked (GlcNAc...) asparagine). WD repeat units follow at residues 222 to 262 (AHKN…LIKE) and 267 to 306 (VDKA…NTET). Residues 416-435 (THYSLNESLRNEDTKSAGEP) are disordered. Over residues 424-435 (LRNEDTKSAGEP) the composition is skewed to basic and acidic residues.

Belongs to the WD repeat PROPPIN family. N-glycosylated.

Its subcellular location is the endosome membrane. It localises to the prevacuolar compartment membrane. Functionally, involved in piecemeal microautophagy of the nucleus (micronucleophagy). This is SVP1-like protein 2 (HSV2) from Saccharomyces cerevisiae (strain ATCC 204508 / S288c) (Baker's yeast).